The sequence spans 249 residues: Small ribosomal subunit protein eS6 (249 aa).

Lys14 participates in a covalent cross-link: Glycyl lysine isopeptide (Lys-Gly) (interchain with G-Cter in SUMO2). Position 35 is an ADP-ribosyl glutamic acid (Glu35). Position 137 is a (3R)-3-hydroxyarginine (Arg137). Position 148 is a phosphoserine (Ser148). N6-acetyllysine is present on Lys211. Basic and acidic residues predominate over residues 217–229 (MKEAKEKRQEQIA). Residues 217 to 249 (MKEAKEKRQEQIAKRRRLSSLRASTSKSESSQK) form a disordered region. Phosphoserine occurs at positions 235, 236, 240, 242, 244, and 247. A compositionally biased stretch (low complexity) spans 236–249 (SLRASTSKSESSQK).

The protein belongs to the eukaryotic ribosomal protein eS6 family. Component of the small ribosomal subunit. Part of the small subunit (SSU) processome, composed of more than 70 proteins and the RNA chaperone small nucleolar RNA (snoRNA) U3. Post-translationally, ribosomal protein S6 is the major substrate of protein kinases in eukaryote ribosomes. The phosphorylation is stimulated by growth factors, tumor promoting agents, and mitogens. It is dephosphorylated at growth arrest. Phosphorylated at Ser-235 and Ser-236 by RPS6KA1 and RPS6KA3; phosphorylation at these sites facilitates the assembly of the pre-initiation complex. In terms of processing, specifically hydroxylated (with R stereochemistry) at C-3 of Arg-137 by KDM8. Mono-ADP-ribosylation at Glu-35 by PARP16 inhibits polysome assembly and mRNA loading, thereby inhibiting protein translation.

Its subcellular location is the cytoplasm. The protein localises to the nucleus. The protein resides in the nucleolus. Functionally, component of the 40S small ribosomal subunit. Plays an important role in controlling cell growth and proliferation through the selective translation of particular classes of mRNA. Part of the small subunit (SSU) processome, first precursor of the small eukaryotic ribosomal subunit. During the assembly of the SSU processome in the nucleolus, many ribosome biogenesis factors, an RNA chaperone and ribosomal proteins associate with the nascent pre-rRNA and work in concert to generate RNA folding, modifications, rearrangements and cleavage as well as targeted degradation of pre-ribosomal RNA by the RNA exosome. The chain is Small ribosomal subunit protein eS6 (RPS6) from Oryctolagus cuniculus (Rabbit).